The sequence spans 291 residues: F-box protein PP2-A12 (291 aa).

An F-box domain is found at 25–71 (KPGLGDLPEACVAIIVENLDPVEICRFSKLNRAFRGASWADCVWESK).

This chain is F-box protein PP2-A12 (P2A12), found in Arabidopsis thaliana (Mouse-ear cress).